The primary structure comprises 233 residues: Charged multivesicular body protein 4c (233 aa).

Disordered stretches follow at residues 1-24 (MSKL…SPQE) and 173-233 (QEEL…AWAT). The tract at residues 1 to 153 (MSKLGKFFKG…EISEAFSQRV (153 aa)) is intramolecular interaction with C-terminus. A coiled-coil region spans residues 125-183 (LNKIDDLMQEITEQQDIAQEISEAFSQRVGFGDDFDEDELMAELEELEQEELNKKMTNI). Residues 154-233 (GFGDDFDEDE…DIKQLAAWAT (80 aa)) are intramolecular interaction with N-terminus. Low complexity predominate over residues 204–216 (SSTARRSRAASSQ). The residue at position 210 (S210) is a Phosphoserine; by AURKB.

This sequence belongs to the SNF7 family. Probable core component of the endosomal sorting required for transport complex III (ESCRT-III). ESCRT-III components are thought to multimerize to form a flat lattice on the perimeter membrane of the endosome. Several assembly forms of ESCRT-III may exist that interact and act sequentially. Self-associates. Interacts with CHMP2A. Interacts with CHMP4A. Interacts with CHMP4B. Interacts with CHMP6. Interacts with VPS4A. Interacts with PDCD6IP; the interaction is direct. Post-translationally, phosphorylated at Ser-210 by AURKB during cytokinesis: together with ZFYVE19/ANCHR, phosphorylated CHMP4C retains abscission-competent VPS4 (VPS4A and/or VPS4B) at the midbody ring until abscission checkpoint signaling is terminated at late cytokinesis. As to expression, expressed in heart, spleen and kidney.

The protein localises to the cytoplasm. Its subcellular location is the cytosol. It is found in the late endosome membrane. It localises to the midbody. The protein resides in the midbody ring. Probable core component of the endosomal sorting required for transport complex III (ESCRT-III) which is involved in multivesicular bodies (MVBs) formation and sorting of endosomal cargo proteins into MVBs. MVBs contain intraluminal vesicles (ILVs) that are generated by invagination and scission from the limiting membrane of the endosome and mostly are delivered to lysosomes enabling degradation of membrane proteins, such as stimulated growth factor receptors, lysosomal enzymes and lipids. The MVB pathway appears to require the sequential function of ESCRT-O, -I,-II and -III complexes. ESCRT-III proteins mostly dissociate from the invaginating membrane before the ILV is released. The ESCRT machinery also functions in topologically equivalent membrane fission events, such as the terminal stages of cytokinesis and the budding of enveloped viruses (HIV-1 and other lentiviruses). Key component of the cytokinesis checkpoint, a process required to delay abscission to prevent both premature resolution of intercellular chromosome bridges and accumulation of DNA damage: upon phosphorylation by AURKB, together with ZFYVE19/ANCHR, retains abscission-competent VPS4 (VPS4A and/or VPS4B) at the midbody ring until abscission checkpoint signaling is terminated at late cytokinesis. Deactivation of AURKB results in dephosphorylation of CHMP4C followed by its dissociation from ANCHR and VPS4 and subsequent abscission. ESCRT-III proteins are believed to mediate the necessary vesicle extrusion and/or membrane fission activities, possibly in conjunction with the AAA ATPase VPS4. Involved in HIV-1 p6- and p9-dependent virus release. CHMP4A/B/C are required for the exosomal release of SDCBP, CD63 and syndecan. This chain is Charged multivesicular body protein 4c (CHMP4C), found in Homo sapiens (Human).